The following is a 659-amino-acid chain: ATP-binding cassette sub-family D member 3 (659 aa).

The segment at 2-61 is interaction with PEX19; sequence AAFSKYLTARNSSLAGAAFLLFCLLHKRRRALGLHGKKSGKPPLQNNEKEGKKERAVVDK. Asn12 carries an N-linked (GlcNAc...) asparagine glycan. N6-acetyllysine is present on Lys61. Residues 84 to 104 traverse the membrane as a helical segment; it reads GYLILIAVMLVSRTYCDVWMI. One can recognise an ABC transmembrane type-1 domain in the interval 85 to 372; that stretch reads YLILIAVMLV…MLLRMSQALG (288 aa). Asn106 carries an N-linked (GlcNAc...) asparagine glycan. A helical transmembrane segment spans residues 126–146; that stretch reads LFNFIAAMPLISLVNNFLKYG. N-linked (GlcNAc...) asparagine glycosylation occurs at Asn206. The helical transmembrane segment at 224 to 244 threads the bilayer; the sequence is AIGAQGPASMMAYLLVSGLFL. At Lys260 the chain carries N6-acetyllysine. A helical membrane pass occupies residues 313-333; that stretch reads MGFIDSIIAKYIATVVGYLVV. Residue Lys399 is modified to N6-acetyllysine. Ser424 is subject to Phosphoserine. The ABC transporter domain occupies 434 to 659; the sequence is INADNIIKFD…ITEDTVEFGS (226 aa). Residue 473-480 participates in ATP binding; that stretch reads GPNGCGKS. Lys533 carries the N6-acetyllysine modification. Ser659 is modified (phosphoserine).

The protein belongs to the ABC transporter superfamily. ABCD family. Peroxisomal fatty acyl CoA transporter (TC 3.A.1.203) subfamily. Homodimers. Can form heterodimers with ABCD1 and ABCD2. Dimerization is necessary to form an active transporter. Interacts with PEX19; mediates the targeting of ABCD3 to peroxisomes. Ubiquitinated by PEX2 during pexophagy in response to starvation, leading to its degradation.

Its subcellular location is the peroxisome membrane. The catalysed reaction is a very long-chain fatty acyl-CoA + H2O = a very long-chain fatty acid + CoA + H(+). The enzyme catalyses a very long-chain fatty acid(in) + ATP + H2O = a very long-chain fatty acid(out) + ADP + phosphate + H(+). It carries out the reaction a long-chain fatty acyl-CoA + H2O = a long-chain fatty acid + CoA + H(+). It catalyses the reaction a long-chain fatty acid(in) + ATP + H2O = a long-chain fatty acid(out) + ADP + phosphate + H(+). The catalysed reaction is pristanoyl-CoA + H2O = 2,6,10,14-tetramethylpentadecanoate + CoA + H(+). The enzyme catalyses 2,6,10,14-tetramethylpentadecanoate(in) + ATP + H2O = 2,6,10,14-tetramethylpentadecanoate(out) + ADP + phosphate + H(+). It carries out the reaction hexadecanedioyl-CoA + H2O = hexadecanedioate + CoA + H(+). It catalyses the reaction hexadecanedioate(in) + ATP + H2O = hexadecanedioate(out) + ADP + phosphate + H(+). The catalysed reaction is (5Z,8Z,11Z,14Z,17Z)-eicosapentaenoyl-CoA + H2O = (5Z,8Z,11Z,14Z,17Z)-eicosapentaenoate + CoA + H(+). The enzyme catalyses (5Z,8Z,11Z,14Z,17Z)-eicosapentaenoate(in) + ATP + H2O = (5Z,8Z,11Z,14Z,17Z)-eicosapentaenoate(out) + ADP + phosphate + H(+). It carries out the reaction (4Z,7Z,10Z,13Z,16Z,19Z)-docosahexaenoyl-CoA + H2O = (4Z,7Z,10Z,13Z,16Z,19Z)-docosahexaenoate + CoA + H(+). It catalyses the reaction (4Z,7Z,10Z,13Z,16Z,19Z)-docosahexaenoate(in) + ATP + H2O = (4Z,7Z,10Z,13Z,16Z,19Z)-docosahexaenoate(out) + ADP + phosphate + H(+). Its function is as follows. Broad substrate specificity ATP-dependent transporter of the ATP-binding cassette (ABC) family that catalyzes the transport of long-chain fatty acids (LCFA)-CoA, dicarboxylic acids-CoA, long-branched-chain fatty acids-CoA and bile acids from the cytosol to the peroxisome lumen for beta-oxydation. Has fatty acyl-CoA thioesterase and ATPase activities. Probably hydrolyzes fatty acyl-CoAs into free fatty acids prior to their ATP-dependent transport into peroxisomes. Thus, play a role in regulation of LCFAs and energy metabolism namely, in the degradation and biosynthesis of fatty acids by beta-oxidation. This chain is ATP-binding cassette sub-family D member 3 (Abcd3), found in Rattus norvegicus (Rat).